Consider the following 135-residue polypeptide: Small ribosomal subunit protein bS16 (135 aa).

This sequence belongs to the bacterial ribosomal protein bS16 family.

This Prosthecochloris aestuarii (strain DSM 271 / SK 413) protein is Small ribosomal subunit protein bS16.